The sequence spans 299 residues: Maintenance of mitochondrial morphology protein 1 (299 aa).

Over 1 to 15 (MTNIIFSLQPTFTQG) the chain is Lumenal. Residues 16 to 36 (LILGQLSVLVLLGLILKYLFL) form a helical membrane-spanning segment. Over 37–299 (DSTKNPFETT…QEESKRQEEA (263 aa)) the chain is Cytoplasmic. The disordered stretch occupies residues 47-68 (SYHPQFDRKPARKQQAQDSQSQ). An SMP-LTD domain is found at 73–281 (DVESLDWFNL…LPGLASVAEA (209 aa)).

Belongs to the MMM1 family. Homodimer. Component of the ER-mitochondria encounter structure (ERMES) or MDM complex, composed of MMM1, MDM10, MDM12 and MDM34. An MMM1 homodimer associates with one molecule of MDM12 on each side in a pairwise head-to-tail manner, and the SMP-LTD domains of MMM1 and MDM12 generate a continuous hydrophobic tunnel for phospholipid trafficking.

It is found in the endoplasmic reticulum membrane. Its function is as follows. Component of the ERMES/MDM complex, which serves as a molecular tether to connect the endoplasmic reticulum (ER) and mitochondria. Components of this complex are involved in the control of mitochondrial shape and protein biogenesis, and function in nonvesicular lipid trafficking between the ER and mitochondria. The MDM12-MMM1 subcomplex functions in the major beta-barrel assembly pathway that is responsible for biogenesis of all outer membrane beta-barrel proteins, and acts in a late step after the SAM complex. The MDM10-MDM12-MMM1 subcomplex further acts in the TOM40-specific pathway after the action of the MDM12-MMM1 complex. Essential for establishing and maintaining the structure of mitochondria and maintenance of mtDNA nucleoids. This is Maintenance of mitochondrial morphology protein 1 from Coprinopsis cinerea (strain Okayama-7 / 130 / ATCC MYA-4618 / FGSC 9003) (Inky cap fungus).